The sequence spans 303 residues: Probable alpha-L-glutamate ligase 1 (303 aa).

The region spanning 104–287 (LQLLSRKGVG…IAGLIYSFIE (184 aa)) is the ATP-grasp domain. Residues Lys-141, 178–179 (EF), Asp-187, and 211–213 (RSN) each bind ATP. Asp-248, Glu-260, and Asn-262 together coordinate Mg(2+). Residues Asp-248, Glu-260, and Asn-262 each coordinate Mn(2+).

This sequence belongs to the RimK family. Mg(2+) serves as cofactor. It depends on Mn(2+) as a cofactor.

This chain is Probable alpha-L-glutamate ligase 1, found in Hahella chejuensis (strain KCTC 2396).